The primary structure comprises 396 residues: Cytochrome b (396 aa).

The next 4 helical transmembrane spans lie at 37 to 57 (FGSLLSLCLILQIITGLILAM), 81 to 102 (WLMRNLHANGASMFFICIYAHI), 117 to 137 (WNVGVILFALTAATAFVGYVL), and 182 to 202 (FFTFHFILPFILAAMTMIHIM). Histidine 87 and histidine 101 together coordinate heme b. 2 residues coordinate heme b: histidine 186 and histidine 200. A ubiquinone is bound at residue histidine 205. Helical transmembrane passes span 230 to 250 (FKDILGFVILLGILFMISLLA), 292 to 312 (LGGVVALAAAIMILLIIPFTH), 324 to 344 (LAQITFWILIADLALLTWLGG), and 351 to 371 (FILMTQIASTVYFMIFILVFP).

The protein belongs to the cytochrome b family. The cytochrome bc1 complex contains 3 respiratory subunits (MT-CYB, CYC1 and UQCRFS1), 2 core proteins (UQCRC1 and UQCRC2) and probably 6 low-molecular weight proteins. Heme b serves as cofactor.

It is found in the mitochondrion inner membrane. Component of the ubiquinol-cytochrome c reductase complex (complex III or cytochrome b-c1 complex) that is part of the mitochondrial respiratory chain. The b-c1 complex mediates electron transfer from ubiquinol to cytochrome c. Contributes to the generation of a proton gradient across the mitochondrial membrane that is then used for ATP synthesis. The sequence is that of Cytochrome b (mt-cyb) from Petromyzon marinus (Sea lamprey).